An 851-amino-acid polypeptide reads, in one-letter code: MDIHTLRSRWAYNVQLLKQLQWACTDTAKRSLNGTISNIEASSFANNLQKCTEALQFCIQKSLTIERTLKNYEIDVPLPVIKDVLLEQELMKYYTVILMEGCKLIFDYSISIFRIGTEPRFMLCLIKLYLNLDSITELLGNEGNQFSDLLNSFEYQFMTQYNIINCNTIHLDQVRDIFAKSNPLIAPPLLTVNDIEKRGYFFLSSVDLHIDNKLIEIAQLKNGHLAVFYVNSQRQSFSTNGAKQLLKELVEGRMELLNMGRTLLFQTLKQRDMVIFLEFEDSLELVTNNSLTKKLLIQCVDKVSWCTYWKIYLENLFSEEQARTNVKASTSMLNPSHSFQNFKIKHTKLSELRPVSHQGIALNIPQKKSQNCQANITKSDDLEEDPGFKFAIHQSNPINEIYTSQTEELITSPSLNEIEYLSYDKLIALDRSLELTLSPKLLESPREANYKTVSQTFSLDRINNISQNTPEVSDQESIVSNDELEKEPVFNPSVEDHKPQLLRKKSSLLSIFSNKNKSKNKNNLKLEINSQMSSSNLSLNSASSSRTFFSVNSNDSTSTTVSDKYIEDSDRFQLDNTTSILQLKVTKASCWDKSSWQVLSSFPLLLSLVKDHEAVYLTLQNPSNSGRFKFVTRISNIWKTTRSTAKDIQISIPTKDILATILDDLTNTTPRYQVLSLRTEEAERLKNTIDHCINGDMLSSISNSTTTRTLSSDASSSYMSQVSSNVSRSSTEVSDLNVHDFKSMASVKNILVLSDIKARLHTKNNGRWCPHHIGLVNIYSLETPNNKKGIRFELTTDTRTTFQFNSKIHDLKRLGRTGIAMIDDSEYLFEFPNNVITEQIYRYIAPSHPMI.

Belongs to the UPF0508 family.

This Candida glabrata (strain ATCC 2001 / BCRC 20586 / JCM 3761 / NBRC 0622 / NRRL Y-65 / CBS 138) (Yeast) protein is UPF0508 protein CAGL0M08074g.